The primary structure comprises 276 residues: NAD-capped RNA hydrolase NudC (276 aa).

Arg82 contributes to the substrate binding site. The Zn(2+) site is built by Cys112 and Cys115. A substrate-binding site is contributed by Glu125. Positions 130 and 133 each coordinate Zn(2+). Residue Tyr138 coordinates substrate. The Nudix hydrolase domain maps to 139–262 (PRISPSMIVL…SIARYLIDVY (124 aa)). A divalent metal cation-binding residues include Ala172, Glu188, and Glu192. The Nudix box motif lies at 173 to 194 (GFAEPGESAEDCLIREVREEVQ). 206-213 (QCWPFPHS) is a binding site for substrate. An a divalent metal cation-binding site is contributed by Glu233. Residue Ala255 coordinates substrate.

This sequence belongs to the Nudix hydrolase family. NudC subfamily. Homodimer. Requires Mg(2+) as cofactor. The cofactor is Mn(2+). Zn(2+) serves as cofactor.

The enzyme catalyses a 5'-end NAD(+)-phospho-ribonucleoside in mRNA + H2O = a 5'-end phospho-adenosine-phospho-ribonucleoside in mRNA + beta-nicotinamide D-ribonucleotide + 2 H(+). It carries out the reaction NAD(+) + H2O = beta-nicotinamide D-ribonucleotide + AMP + 2 H(+). The catalysed reaction is NADH + H2O = reduced beta-nicotinamide D-ribonucleotide + AMP + 2 H(+). Functionally, mRNA decapping enzyme that specifically removes the nicotinamide adenine dinucleotide (NAD) cap from a subset of mRNAs by hydrolyzing the diphosphate linkage to produce nicotinamide mononucleotide (NMN) and 5' monophosphate mRNA. The NAD-cap is present at the 5'-end of some mRNAs and stabilizes RNA against 5'-processing. Has preference for mRNAs with a 5'-end purine. Catalyzes the hydrolysis of a broad range of dinucleotide pyrophosphates. The chain is NAD-capped RNA hydrolase NudC from Pseudomonas fluorescens (strain Pf0-1).